A 647-amino-acid chain; its full sequence is Exoribonuclease 2 (647 aa).

Residues 192-520 enclose the RNB domain; it reads REDLTALSFV…NHRLLKAIIS (329 aa). An S1 motif domain is found at 565-647; sequence ESTFNAEIID…ETRNIVARPI (83 aa).

This sequence belongs to the RNR ribonuclease family. RNase II subfamily.

Its subcellular location is the cytoplasm. It catalyses the reaction Exonucleolytic cleavage in the 3'- to 5'-direction to yield nucleoside 5'-phosphates.. Involved in mRNA degradation. Hydrolyzes single-stranded polyribonucleotides processively in the 3' to 5' direction. In Proteus mirabilis (strain HI4320), this protein is Exoribonuclease 2.